Consider the following 359-residue polypeptide: Peptide chain release factor 1 (359 aa).

Residue glutamine 235 is modified to N5-methylglutamine.

The protein belongs to the prokaryotic/mitochondrial release factor family. Post-translationally, methylated by PrmC. Methylation increases the termination efficiency of RF1.

The protein resides in the cytoplasm. Its function is as follows. Peptide chain release factor 1 directs the termination of translation in response to the peptide chain termination codons UAG and UAA. This is Peptide chain release factor 1 from Polynucleobacter asymbioticus (strain DSM 18221 / CIP 109841 / QLW-P1DMWA-1) (Polynucleobacter necessarius subsp. asymbioticus).